Here is a 63-residue protein sequence, read N- to C-terminus: Small ribosomal subunit protein uS14 (63 aa).

Positions 26, 29, 42, and 45 each coordinate Zn(2+).

The protein belongs to the universal ribosomal protein uS14 family. Zinc-binding uS14 subfamily. As to quaternary structure, part of the 30S ribosomal subunit. Contacts proteins S3 and S10. The cofactor is Zn(2+).

Binds 16S rRNA, required for the assembly of 30S particles and may also be responsible for determining the conformation of the 16S rRNA at the A site. The sequence is that of Small ribosomal subunit protein uS14 from Gloeobacter violaceus (strain ATCC 29082 / PCC 7421).